Here is a 364-residue protein sequence, read N- to C-terminus: MLNPSIERKLEGLVERYQEVQALLGEPDVISDQNRFRSLSREYSQLEEVVGCFEEYRQNQDDQAAAKDMAEDDDAEMREMAEEELKEARKAEEELENRLQLLLLPKDPNDDRSCYLEIRAGAGGDEASIFAGDLFRMYSRYAEKNGWKVNIVSASDGEHGGYKEIIAHMSGDGVYGRMKFESGGHRVQRVPETESQGRIHTSACTVAVLPEIPEAEAVEINPADLRVDTYRASGAGGQHVNRTDSAIRLTHIPTGVVVECQEERSQHKNRAKAMSVLQARIQRLEDEKRQAEEDSTRRNLVGSGDRSERIRTYNYPQSRVTDHRINLTLYRLDEVLTGDIDLILDAIITEHQADQLAALSEGQQ.

Position 238 is an N5-methylglutamine (Q238). The segment covering 286 to 297 has biased composition (basic and acidic residues); sequence DEKRQAEEDSTR. Residues 286 to 315 form a disordered region; it reads DEKRQAEEDSTRRNLVGSGDRSERIRTYNY.

The protein belongs to the prokaryotic/mitochondrial release factor family. Post-translationally, methylated by PrmC. Methylation increases the termination efficiency of RF1.

The protein localises to the cytoplasm. Peptide chain release factor 1 directs the termination of translation in response to the peptide chain termination codons UAG and UAA. The chain is Peptide chain release factor 1 from Idiomarina loihiensis (strain ATCC BAA-735 / DSM 15497 / L2-TR).